The following is a 364-amino-acid chain: Methylthioribose-1-phosphate isomerase (364 aa).

Substrate is bound by residues 46 to 48 (RGA), R89, and Q196. The active-site Proton donor is the D237. Residue 247–248 (NK) coordinates substrate.

Belongs to the eIF-2B alpha/beta/delta subunits family. MtnA subfamily.

It catalyses the reaction 5-(methylsulfanyl)-alpha-D-ribose 1-phosphate = 5-(methylsulfanyl)-D-ribulose 1-phosphate. It participates in amino-acid biosynthesis; L-methionine biosynthesis via salvage pathway; L-methionine from S-methyl-5-thio-alpha-D-ribose 1-phosphate: step 1/6. Its function is as follows. Catalyzes the interconversion of methylthioribose-1-phosphate (MTR-1-P) into methylthioribulose-1-phosphate (MTRu-1-P). The polypeptide is Methylthioribose-1-phosphate isomerase (Pelotomaculum thermopropionicum (strain DSM 13744 / JCM 10971 / SI)).